Reading from the N-terminus, the 339-residue chain is Undecaprenyl-phosphate 4-deoxy-4-formamido-L-arabinose transferase (339 aa).

The next 2 helical transmembrane spans lie at 235–255 (LSLVGGGMALAGFLFALFLLV) and 269–289 (LFVLFAVLFMFSGVQLLGMGL).

This sequence belongs to the glycosyltransferase 2 family.

The protein resides in the cell inner membrane. It catalyses the reaction UDP-4-deoxy-4-formamido-beta-L-arabinose + di-trans,octa-cis-undecaprenyl phosphate = 4-deoxy-4-formamido-alpha-L-arabinopyranosyl di-trans,octa-cis-undecaprenyl phosphate + UDP. It participates in glycolipid biosynthesis; 4-amino-4-deoxy-alpha-L-arabinose undecaprenyl phosphate biosynthesis; 4-amino-4-deoxy-alpha-L-arabinose undecaprenyl phosphate from UDP-4-deoxy-4-formamido-beta-L-arabinose and undecaprenyl phosphate: step 1/2. It functions in the pathway bacterial outer membrane biogenesis; lipopolysaccharide biosynthesis. Catalyzes the transfer of 4-deoxy-4-formamido-L-arabinose from UDP to undecaprenyl phosphate. The modified arabinose is attached to lipid A and is required for resistance to polymyxin and cationic antimicrobial peptides. This chain is Undecaprenyl-phosphate 4-deoxy-4-formamido-L-arabinose transferase, found in Pseudomonas paraeruginosa (strain DSM 24068 / PA7) (Pseudomonas aeruginosa (strain PA7)).